The following is a 108-amino-acid chain: Anti-sigma-B factor antagonist (108 aa).

One can recognise an STAS domain in the interval 3–108 (LNIETTTQDK…MHVNEGTEVE (106 aa)). A Phosphoserine modification is found at serine 57.

This sequence belongs to the anti-sigma-factor antagonist family. Phosphorylated by RsbW on a serine residue.

Its function is as follows. Positive regulator of sigma-B activity. Non-phosphorylated RsbV binds to RsbW, preventing its association with sigma-B. When phosphorylated, releases RsbW, which is then free to complex with and inactivate sigma-B. This is Anti-sigma-B factor antagonist (rsbV) from Staphylococcus aureus (strain NCTC 8325 / PS 47).